We begin with the raw amino-acid sequence, 531 residues long: Bifunctional aspartate aminotransferase and L-aspartate beta-decarboxylase (531 aa).

L-aspartate contacts are provided by G114 and N255. An N6-(pyridoxal phosphate)lysine modification is found at K314. L-aspartate is bound at residue R496.

This sequence belongs to the class-I pyridoxal-phosphate-dependent aminotransferase family. Homododecamer. Pyridoxal 5'-phosphate serves as cofactor.

It catalyses the reaction L-aspartate + H(+) = L-alanine + CO2. The catalysed reaction is L-aspartate + 2-oxoglutarate = oxaloacetate + L-glutamate. Inhibited by 10 mM Co(2+), Mn(2+) and Ni(2+), and by 1 mM Cu(2+) and Hg(2+). In terms of biological role, bifunctional enzyme that has both L-aspartate decarboxylase and transaminase activity. Has high activity with L-aspartate, and much lower activity with D-aspartate, L-lysine and L-glutamine. The sequence is that of Bifunctional aspartate aminotransferase and L-aspartate beta-decarboxylase from Pseudomonas sp.